We begin with the raw amino-acid sequence, 345 residues long: Probable galacturonosyltransferase-like 3 (345 aa).

Residues 1–7 (MSSLRLR) lie on the Cytoplasmic side of the membrane. The helical; Signal-anchor for type II membrane protein transmembrane segment at 8–28 (LCLLLLLPITISCVTVTLTDL) threads the bilayer. Over 29–345 (PAFREAPAFR…FRYSPLISDS (317 aa)) the chain is Lumenal. N-linked (GlcNAc...) asparagine glycosylation is present at asparagine 197.

This sequence belongs to the glycosyltransferase 8 family.

It is found in the golgi apparatus membrane. It participates in glycan metabolism; pectin biosynthesis. May be involved in pectin and/or xylans biosynthesis in cell walls. The sequence is that of Probable galacturonosyltransferase-like 3 (GATL3) from Arabidopsis thaliana (Mouse-ear cress).